We begin with the raw amino-acid sequence, 291 residues long: Hydroxysteroid 11-beta-dehydrogenase 1-like protein A (291 aa).

Positions 1 to 18 (MAGVKLLLLSLCVGYTAY) are cleaved as a signal peptide. Residues 40-66 (GSST…TARR), 91-92 (DM), and 118-120 (NHI) contribute to the NADP(+) site. S170 is a binding site for substrate. Y183 serves as the catalytic Proton acceptor. NADP(+)-binding positions include 183 to 187 (YCASK) and 216 to 222 (GYIDTEN).

It belongs to the short-chain dehydrogenases/reductases (SDR) family.

It localises to the secreted. It catalyses the reaction cortisone + NADPH + H(+) = cortisol + NADP(+). Its function is as follows. Unidirectional NADP(+)-dependent cortisol dehydrogenase (in vitro). The chain is Hydroxysteroid 11-beta-dehydrogenase 1-like protein A (hsd11b1l-a) from Xenopus laevis (African clawed frog).